We begin with the raw amino-acid sequence, 439 residues long: Cell division protein FtsA (439 aa).

This sequence belongs to the FtsA/MreB family. As to quaternary structure, self-interacts. Interacts with FtsZ.

Its subcellular location is the cell inner membrane. Cell division protein that is involved in the assembly of the Z ring. May serve as a membrane anchor for the Z ring. This chain is Cell division protein FtsA, found in Shigella flexneri.